The following is a 266-amino-acid chain: MKEMKVIIAGPRGRMGHEAVLLMERTEHFNLVAAVDYKHGGEKISDLPGMPALDATIYADLHTCLEEVEADVLLDLTTPEVGKQHVTLAVERGLRSVIGTTGFTEEELKQLTETAKEKAVGTIIAPNFAIGAVLMMKFSQMAAKYFQDVEVIELHHDQKLDAPSGTAVKTVELIRQNRESKQQGHPNEVEQLEGARGANVDGIHIHSVRLPGLIAHQEVMFGGDGQMLTVRHDSFNRASFMSGVKLSIETVMNLDHLVYGLENIID.

10–15 serves as a coordination point for NAD(+); sequence GPRGRM. Position 38 (Lys38) interacts with NADP(+). NAD(+) is bound by residues 99–101 and 125–128; these read GTT and APNF. His155 (proton donor/acceptor) is an active-site residue. A (S)-2,3,4,5-tetrahydrodipicolinate-binding site is contributed by His156. The active-site Proton donor is the Lys159. 165 to 166 is a (S)-2,3,4,5-tetrahydrodipicolinate binding site; the sequence is GT.

This sequence belongs to the DapB family.

It is found in the cytoplasm. It carries out the reaction (S)-2,3,4,5-tetrahydrodipicolinate + NAD(+) + H2O = (2S,4S)-4-hydroxy-2,3,4,5-tetrahydrodipicolinate + NADH + H(+). It catalyses the reaction (S)-2,3,4,5-tetrahydrodipicolinate + NADP(+) + H2O = (2S,4S)-4-hydroxy-2,3,4,5-tetrahydrodipicolinate + NADPH + H(+). The protein operates within amino-acid biosynthesis; L-lysine biosynthesis via DAP pathway; (S)-tetrahydrodipicolinate from L-aspartate: step 4/4. Functionally, catalyzes the conversion of 4-hydroxy-tetrahydrodipicolinate (HTPA) to tetrahydrodipicolinate. The protein is 4-hydroxy-tetrahydrodipicolinate reductase of Bacillus anthracis (strain A0248).